The chain runs to 499 residues: Putative DBH-like monooxygenase protein 2 (499 aa).

The N-terminal stretch at 1–16 (MAHDLLFRLFPLLALG) is a signal peptide. One can recognise a DOMON domain in the interval 40 to 156 (NVIFLRWDFD…NTVRVLAAYG (117 aa)). Y209 is a catalytic residue. 2 disulfides stabilise this stretch: C211–C261 and C248–C271. N236 carries N-linked (GlcNAc...) asparagine glycosylation. 2 residues coordinate Cu cation: H241 and H242. Residue N250 is glycosylated (N-linked (GlcNAc...) asparagine). Residues H308, H389, and H391 each coordinate Cu cation. 2 cysteine pairs are disulfide-bonded: C365–C480 and C443–C465. Residue H389 is part of the active site. The N-linked (GlcNAc...) asparagine glycan is linked to N404. M464 is a binding site for Cu cation. N476 carries N-linked (GlcNAc...) asparagine glycosylation.

It belongs to the copper type II ascorbate-dependent monooxygenase family. Cu(2+) is required as a cofactor.

The sequence is that of Putative DBH-like monooxygenase protein 2 (MOXD2P) from Homo sapiens (Human).